We begin with the raw amino-acid sequence, 146 residues long: MIYVDADACPVKPEILKVAERHGLEVTFVANSGLRPSRDPMVRNVIVSAGFDAADDWIAERAKDGDIVVTADVPLAVRCVGAGALVTGPTGRVFDETNIGMASAMRDLSAHLRETGESKGYNAALTSRDRSAFLETLDRLCRRVKR.

This sequence belongs to the UPF0178 family.

The sequence is that of UPF0178 protein R01393 from Rhizobium meliloti (strain 1021) (Ensifer meliloti).